Here is a 153-residue protein sequence, read N- to C-terminus: Arginine repressor (153 aa).

Belongs to the ArgR family.

It is found in the cytoplasm. It functions in the pathway amino-acid biosynthesis; L-arginine biosynthesis [regulation]. Regulates arginine biosynthesis genes. The polypeptide is Arginine repressor (Actinobacillus pleuropneumoniae serotype 7 (strain AP76)).